The chain runs to 1070 residues: uncharacterized protein (1070 aa).

A UBA domain is found at leucine 477 to glutamate 523.

This is an uncharacterized protein from Sulfolobus islandicus rod-shaped virus 1 (SIRV-1).